We begin with the raw amino-acid sequence, 244 residues long: Krueppel-like factor 9 (244 aa).

Disordered regions lie at residues 26-51 and 79-143; these read EHGGAPEAERLRLPEREVTKEHGDPG and PSVC…EKRH. The segment covering 32–51 has biased composition (basic and acidic residues); the sequence is EAERLRLPEREVTKEHGDPG. Serine 122 carries the phosphoserine modification. The span at 134-143 shows a compositional bias: basic residues; that stretch reads KGKHASEKRH. 3 C2H2-type zinc fingers span residues 143–167, 173–197, and 203–225; these read HKCPYSGCGKVYGKSSHLKAHYRVH, FPCTWPDCLKKFSRSDELTRHYRTH, and FRCPLCEKRFMRSDHLTKHARRH.

Belongs to the Sp1 C2H2-type zinc-finger protein family. In terms of assembly, interacts with ZZEF1.

The protein localises to the nucleus. Transcription factor that binds to GC box promoter elements. Selectively activates mRNA synthesis from genes containing tandem repeats of GC boxes but represses genes with a single GC box. Acts as an epidermal circadian transcription factor regulating keratinocyte proliferation. This is Krueppel-like factor 9 (Klf9) from Mus musculus (Mouse).